The following is a 507-amino-acid chain: Histone-lysine N-methyltransferase set-18 (507 aa).

Residues C49, C52, C65, C68, C74, C78, H86, and C90 each coordinate Zn(2+). The MYND-type zinc finger occupies 49-90 (CANCLRGPAPGEKLLRCGGCNFSMYCSKECQATAWLVHKPEC).

The protein belongs to the class V-like SAM-binding methyltransferase superfamily. Histone-lysine methyltransferase family. In terms of tissue distribution, expressed in pharyngeal and body wall muscles.

It catalyses the reaction L-lysyl(36)-[histone H3] + 2 S-adenosyl-L-methionine = N(6),N(6)-dimethyl-L-lysyl(36)-[histone H3] + 2 S-adenosyl-L-homocysteine + 2 H(+). Functionally, histone methyltransferase. Specifically methylates 'Lys-36' of histone H3, inducing di-methylation. Plays a role in modulating lifespan and oxidative stress resistance, in a manner dependent upon daf-16/Forkhead box protein O and the Insulin/IGF-1-like signaling (IIS) mediated pathway. Represses transcription of daf-16 isoform a, perhaps by methylating histone H3 at the daf-16 promoter, which in turn leads to recruitment of histone deacetylases and thus modulation of expression. This Caenorhabditis elegans protein is Histone-lysine N-methyltransferase set-18.